The primary structure comprises 394 residues: Phosphoglycerate kinase (394 aa).

Substrate is bound by residues D21–N23, R36, H59–R62, R113, and R146. Residues K197, E319, and G345–T348 each bind ATP.

This sequence belongs to the phosphoglycerate kinase family. In terms of assembly, monomer.

It localises to the cytoplasm. It catalyses the reaction (2R)-3-phosphoglycerate + ATP = (2R)-3-phospho-glyceroyl phosphate + ADP. Its pathway is carbohydrate degradation; glycolysis; pyruvate from D-glyceraldehyde 3-phosphate: step 2/5. This Halorhodospira halophila (strain DSM 244 / SL1) (Ectothiorhodospira halophila (strain DSM 244 / SL1)) protein is Phosphoglycerate kinase.